Consider the following 57-residue polypeptide: MGWEGPNSRVDDTFWASWRAFAQIGPARSGFRLETLAGLRSRRLKQPKAFCLRDVAP.

This is an uncharacterized protein from Homo sapiens (Human).